The sequence spans 320 residues: Probable trehalose-phosphate phosphatase C (320 aa).

This sequence belongs to the trehalose phosphatase family. A divalent metal cation serves as cofactor.

It catalyses the reaction alpha,alpha-trehalose 6-phosphate + H2O = alpha,alpha-trehalose + phosphate. It functions in the pathway glycan biosynthesis; trehalose biosynthesis. In terms of biological role, removes the phosphate from trehalose 6-phosphate to produce free trehalose. Trehalose accumulation in plant may improve abiotic stress tolerance. The sequence is that of Probable trehalose-phosphate phosphatase C (TPPC) from Arabidopsis thaliana (Mouse-ear cress).